We begin with the raw amino-acid sequence, 217 residues long: Cytidylate kinase (217 aa).

Residue 9-17 coordinates ATP; that stretch reads GPSSSGKSS.

It belongs to the cytidylate kinase family. Type 1 subfamily.

The protein localises to the cytoplasm. It catalyses the reaction CMP + ATP = CDP + ADP. It carries out the reaction dCMP + ATP = dCDP + ADP. The protein is Cytidylate kinase of Mycoplasma genitalium (strain ATCC 33530 / DSM 19775 / NCTC 10195 / G37) (Mycoplasmoides genitalium).